The chain runs to 173 residues: Protein C2 (173 aa).

Residues 69 to 85 fold into a zinc finger; sequence CNCHFTIHHECNRGFSH.

The protein belongs to the geminiviridae transcriptional activator protein family. In terms of assembly, monomer. Interacting with and inactivating host adenosine kinase 2 (ADK2) in the cytoplasm. Interacts with and inhibits host SNF1 kinase.

It is found in the host cytoplasm. Functionally, acts as a suppressor of RNA-mediated gene silencing, also known as post-transcriptional gene silencing (PTGS), a mechanism of plant viral defense that limits the accumulation of viral RNAs. Suppresses the host RNA silencing by inhibiting adenosine kinase 2 (ADK2), a kinase involved in a general methylation pathway. Also suppresses the host basal defense by interacting with and inhibiting SNF1 kinase, a key regulator of cell metabolism implicated in innate antiviral defense. Determines pathogenicity. This chain is Protein C2, found in Beet curly top virus (strain California/Logan) (BCTV).